Here is a 338-residue protein sequence, read N- to C-terminus: tRNA-specific 2-thiouridylase MnmA (338 aa).

ATP contacts are provided by residues 6-13 (AMSGGVDS) and M32. The active-site Nucleophile is C92. Residues C92 and C186 are joined by a disulfide bond. G116 serves as a coordination point for ATP. The interaction with tRNA stretch occupies residues 134–136 (KDQ). Catalysis depends on C186, which acts as the Cysteine persulfide intermediate. The interaction with tRNA stretch occupies residues 288–289 (RY).

The protein belongs to the MnmA/TRMU family.

It is found in the cytoplasm. It carries out the reaction S-sulfanyl-L-cysteinyl-[protein] + uridine(34) in tRNA + AH2 + ATP = 2-thiouridine(34) in tRNA + L-cysteinyl-[protein] + A + AMP + diphosphate + H(+). Its function is as follows. Catalyzes the 2-thiolation of uridine at the wobble position (U34) of tRNA, leading to the formation of s(2)U34. In Campylobacter lari (strain RM2100 / D67 / ATCC BAA-1060), this protein is tRNA-specific 2-thiouridylase MnmA.